The sequence spans 122 residues: Small ribosomal subunit protein uS13 (122 aa).

The tract at residues 95-122 is disordered; sequence GLPVRGQRTHTNARTRKGPAKSIAGKKK.

The protein belongs to the universal ribosomal protein uS13 family. In terms of assembly, part of the 30S ribosomal subunit. Forms a loose heterodimer with protein S19. Forms two bridges to the 50S subunit in the 70S ribosome.

Located at the top of the head of the 30S subunit, it contacts several helices of the 16S rRNA. In the 70S ribosome it contacts the 23S rRNA (bridge B1a) and protein L5 of the 50S subunit (bridge B1b), connecting the 2 subunits; these bridges are implicated in subunit movement. Contacts the tRNAs in the A and P-sites. This chain is Small ribosomal subunit protein uS13, found in Nitrobacter hamburgensis (strain DSM 10229 / NCIMB 13809 / X14).